A 287-amino-acid chain; its full sequence is Large ribosomal subunit protein uL2 (287 aa).

The tract at residues 220-287 (VRGSVMNPCD…SKRSRGGRDS (68 aa)) is disordered. Positions 271 to 287 (VRRRRRISKRSRGGRDS) are enriched in basic residues.

It belongs to the universal ribosomal protein uL2 family. Part of the 50S ribosomal subunit. Forms a bridge to the 30S subunit in the 70S ribosome.

One of the primary rRNA binding proteins. Required for association of the 30S and 50S subunits to form the 70S ribosome, for tRNA binding and peptide bond formation. It has been suggested to have peptidyltransferase activity; this is somewhat controversial. Makes several contacts with the 16S rRNA in the 70S ribosome. In Prochlorococcus marinus (strain MIT 9515), this protein is Large ribosomal subunit protein uL2.